A 319-amino-acid polypeptide reads, in one-letter code: Probable NAD(P)H-dependent D-xylose reductase xyl1 (319 aa).

Residue Asn-26 is glycosylated (N-linked (GlcNAc...) asparagine). Tyr-50 (proton donor) is an active-site residue. His-112 is a binding site for substrate. Residues Asn-141 and Asn-167 are each glycosylated (N-linked (GlcNAc...) asparagine). Residues 166–167 (SN), 215–224 (SSFGPLSFLE), and 271–281 (KSNNPQRLKQN) contribute to the NAD(+) site.

Belongs to the aldo/keto reductase family.

It carries out the reaction xylitol + NAD(+) = D-xylose + NADH + H(+). The enzyme catalyses xylitol + NADP(+) = D-xylose + NADPH + H(+). It participates in carbohydrate metabolism; D-xylose degradation. Its function is as follows. Catalyzes the initial reaction in the xylose utilization pathway by reducing D-xylose into xylitol. Xylose is a major component of hemicelluloses such as xylan. Most fungi utilize D-xylose via three enzymatic reactions, xylose reductase (XR), xylitol dehydrogenase (XDH), and xylulokinase, to form xylulose 5-phosphate, which enters pentose phosphate pathway. The protein is Probable NAD(P)H-dependent D-xylose reductase xyl1 (xyl1) of Aspergillus niger (strain ATCC MYA-4892 / CBS 513.88 / FGSC A1513).